The primary structure comprises 331 residues: Ornithine carbamoyltransferase (331 aa).

Carbamoyl phosphate contacts are provided by residues 55–58, glutamine 82, arginine 106, and 133–136; these read STRT and HPTQ. Residues asparagine 166, aspartate 230, and 234–235 contribute to the L-ornithine site; that span reads SM. Carbamoyl phosphate contacts are provided by residues 272–273 and arginine 317; that span reads CL.

It belongs to the aspartate/ornithine carbamoyltransferase superfamily. OTCase family.

The protein localises to the cytoplasm. It catalyses the reaction carbamoyl phosphate + L-ornithine = L-citrulline + phosphate + H(+). It participates in amino-acid biosynthesis; L-arginine biosynthesis; L-arginine from L-ornithine and carbamoyl phosphate: step 1/3. Its function is as follows. Reversibly catalyzes the transfer of the carbamoyl group from carbamoyl phosphate (CP) to the N(epsilon) atom of ornithine (ORN) to produce L-citrulline. The protein is Ornithine carbamoyltransferase (argF) of Neisseria meningitidis serogroup A / serotype 4A (strain DSM 15465 / Z2491).